We begin with the raw amino-acid sequence, 147 residues long: ATP synthase subunit 9, mitochondrial (147 aa).

Residues 1–66 (MASTRVLASR…TTRQAFQKRA (66 aa)) constitute a mitochondrion transit peptide. Transmembrane regions (helical) follow at residues 86-106 (SAAIGLTGAGIGIGLVFAALL) and 123-143 (AILGFAFVEAIGLFDLMVALM).

This sequence belongs to the ATPase C chain family. As to quaternary structure, F-type ATPases have 2 components, CF(1) - the catalytic core - and CF(0) - the membrane proton channel. CF(1) has five subunits: alpha(3), beta(3), gamma(1), delta(1), epsilon(1). CF(0) has three main subunits: a, b and c.

The protein resides in the mitochondrion membrane. Mitochondrial membrane ATP synthase (F(1)F(0) ATP synthase or Complex V) produces ATP from ADP in the presence of a proton gradient across the membrane which is generated by electron transport complexes of the respiratory chain. F-type ATPases consist of two structural domains, F(1) - containing the extramembraneous catalytic core and F(0) - containing the membrane proton channel, linked together by a central stalk and a peripheral stalk. During catalysis, ATP synthesis in the catalytic domain of F(1) is coupled via a rotary mechanism of the central stalk subunits to proton translocation. Part of the complex F(0) domain. A homomeric c-ring of probably 10 subunits is part of the complex rotary element. The polypeptide is ATP synthase subunit 9, mitochondrial (oli) (Neurospora crassa (strain ATCC 24698 / 74-OR23-1A / CBS 708.71 / DSM 1257 / FGSC 987)).